Reading from the N-terminus, the 118-residue chain is V-type proton ATPase subunit G 1 (118 aa).

At alanine 2 the chain carries N-acetylalanine. The tract at residues 25 to 90 (ARKRKARRLK…VQGMQSSQQR (66 aa)) is disordered. The span at 35–56 (QAKEEAQMEVEQYRREREHEFQ) shows a compositional bias: basic and acidic residues. Polar residues-rich tracts occupy residues 57–69 (SKQQAAMGSQGNL) and 78–89 (RHQVQGMQSSQQ).

Belongs to the V-ATPase G subunit family. V-ATPase is a heteromultimeric enzyme made up of two complexes: the ATP-hydrolytic V1 complex and the proton translocation V0 complex. The V1 complex consists of three catalytic AB heterodimers that form a heterohexamer, three peripheral stalks each consisting of EG heterodimers, one central rotor including subunits D and F, and the regulatory subunits C and H. The proton translocation complex V0 consists of the proton transport subunit a, a ring of proteolipid subunits c9c'', rotary subunit d, subunits e and f, and the accessory subunits ATP6AP1/Ac45 and ATP6AP2/PRR.

It is found in the apical cell membrane. Functionally, subunit of the V1 complex of vacuolar(H+)-ATPase (V-ATPase), a multisubunit enzyme composed of a peripheral complex (V1) that hydrolyzes ATP and a membrane integral complex (V0) that translocates protons. V-ATPase is responsible for acidifying and maintaining the pH of intracellular compartments and in some cell types, is targeted to the plasma membrane, where it is responsible for acidifying the extracellular environment. In aerobic conditions, involved in intracellular iron homeostasis, thus triggering the activity of Fe(2+) prolyl hydroxylase (PHD) enzymes, and leading to HIF1A hydroxylation and subsequent proteasomal degradation. This is V-type proton ATPase subunit G 1 (ATP6V1G1) from Pan troglodytes (Chimpanzee).